An 82-amino-acid polypeptide reads, in one-letter code: DNA-directed RNA polymerase subunit Rpo5 (82 aa).

This sequence belongs to the archaeal Rpo5/eukaryotic RPB5 RNA polymerase subunit family. As to quaternary structure, part of the RNA polymerase complex.

It localises to the cytoplasm. The enzyme catalyses RNA(n) + a ribonucleoside 5'-triphosphate = RNA(n+1) + diphosphate. In terms of biological role, DNA-dependent RNA polymerase (RNAP) catalyzes the transcription of DNA into RNA using the four ribonucleoside triphosphates as substrates. The sequence is that of DNA-directed RNA polymerase subunit Rpo5 from Pyrococcus horikoshii (strain ATCC 700860 / DSM 12428 / JCM 9974 / NBRC 100139 / OT-3).